We begin with the raw amino-acid sequence, 345 residues long: Phosphoribosylformylglycinamidine cyclo-ligase (345 aa).

Belongs to the AIR synthase family.

It is found in the cytoplasm. The enzyme catalyses 2-formamido-N(1)-(5-O-phospho-beta-D-ribosyl)acetamidine + ATP = 5-amino-1-(5-phospho-beta-D-ribosyl)imidazole + ADP + phosphate + H(+). It functions in the pathway purine metabolism; IMP biosynthesis via de novo pathway; 5-amino-1-(5-phospho-D-ribosyl)imidazole from N(2)-formyl-N(1)-(5-phospho-D-ribosyl)glycinamide: step 2/2. This chain is Phosphoribosylformylglycinamidine cyclo-ligase, found in Synechococcus sp. (strain CC9605).